The sequence spans 364 residues: O-methyltransferase 1 (364 aa).

The S-adenosyl-L-homocysteine site is built by Ser-183, Gly-207, Asp-230, Asp-250, and Lys-264. Asp-230 is an S-adenosyl-L-methionine binding site. His-268 functions as the Proton acceptor in the catalytic mechanism.

The protein belongs to the class I-like SAM-binding methyltransferase superfamily. Cation-independent O-methyltransferase family. Homodimer.

It catalyses the reaction dopamine + S-adenosyl-L-methionine = 3-methoxytyramine + S-adenosyl-L-homocysteine + H(+). The enzyme catalyses 3,4-dihydroxy-5-methoxyphenethylamine + S-adenosyl-L-methionine = 4-hydroxy-3,5-dimethoxyphenethylamine + S-adenosyl-L-homocysteine + H(+). It functions in the pathway aromatic compound metabolism. It participates in alkaloid biosynthesis. O-methyltransferase participating in the biosynthesis of natural products derived from phenylethylamine, including mescaline, a natural hallucinogen potentially used in psychotherapeutic treatments. Catalyzes the O-methylation of mescaline meta hydroxyl groups, using dopamine and 3,4-dihydroxy-5-methoxyphenethylamine as substrates. The polypeptide is O-methyltransferase 1 (Lophophora williamsii (Peyote)).